The following is an 847-amino-acid chain: Rho GTPase-activating protein 12 (847 aa).

The 63-residue stretch at 12–74 (PGQAYIEVEY…PAQYVKEVTR (63 aa)) folds into the SH3 domain. A disordered region spans residues 110–241 (LPELSSFGKP…PPNQGRPDSP (132 aa)). Polar residues-rich tracts occupy residues 117 to 174 (GKPS…QNRT) and 191 to 200 (TSFSQEQSCD). A Phosphoserine modification is found at Ser165. Phosphoserine occurs at positions 201, 213, and 215. Residues 224–234 (TEQIRATTPPN) show a composition bias toward polar residues. Phosphothreonine occurs at positions 230 and 231. At Ser240 the chain carries Phosphoserine. Tyr243 carries the post-translational modification Phosphotyrosine. WW domains are found at residues 265 to 298 (IQINGEWETHKDSSGRCYYYDRGTQERTWKPPRW) and 358 to 391 (DYTNEKWLKHIDDQGRQYYYSADGSRSEWELPKY). The segment at 293–317 (WKPPRWTRDASISKGDFQSPGDQEL) is disordered. Disordered stretches follow at residues 428-466 (DTNDKESPTASKPCFPENESSPSSPKHQDTASSPKDQEK) and 591-625 (PDSPGIEKHDKEKEQKDPKKLRSFKVSSIDSSEQK). Residues 445–461 (NESSPSSPKHQDTASSP) show a composition bias toward polar residues. Positions 463-575 (DQEKYGLLNV…WFKVLSSTIN (113 aa)) constitute a PH domain. Phosphoserine is present on Ser593. Over residues 595-610 (GIEKHDKEKEQKDPKK) the composition is skewed to basic and acidic residues. Residues 657–845 (SNLANLCQRE…LILLELSSIF (189 aa)) enclose the Rho-GAP domain.

Functionally, GTPase activator for the Rho-type GTPases by converting them to an inactive GDP-bound state. The polypeptide is Rho GTPase-activating protein 12 (ARHGAP12) (Macaca fascicularis (Crab-eating macaque)).